A 304-amino-acid chain; its full sequence is MTASSKMTSSTTLLSLFMKEDEEGRNKKTTTSTTLESLLMKERRNWVDLPPELTTSILLRLSLTDILDNAQKVCKEWRRICKDPSMWRKINTRDCLMYNFDFVSMCRHIVDLSQGGLLEINVDEHFLSDSLLSYITDRNLRSLGLGMCFPRVTKLGVVNAIAKIPLLETLEVTHSCIKLDLKAIGHACPQLKTLKLNSLGRLWPASDKYDSNVLDDMGPLECDDDALAIAESMPKLHHLQLMANRLTNTGLNAILDGCPHLEHLDVRKCFRISLVGNLEKRCLEMIKELRRPGDSTADYPYNGV.

The 48-residue stretch at 43–90 (RRNWVDLPPELTTSILLRLSLTDILDNAQKVCKEWRRICKDPSMWRKI) folds into the F-box domain. LRR repeat units lie at residues 132–159 (LSYI…GVVN), 173–198 (THSC…KLNS), 218–241 (GPLE…HLQL), and 243–268 (ANRL…DVRK).

In Arabidopsis thaliana (Mouse-ear cress), this protein is Putative F-box/LRR-repeat protein 21 (FBL21).